Here is a 289-residue protein sequence, read N- to C-terminus: Rhomboid-type serine protease 2 (289 aa).

6 consecutive transmembrane segments (helical) span residues 26-46 (VVII…VDIQ), 67-87 (FPFI…LTPL), 100-120 (CLAL…IGLE), 122-142 (FVFG…LLLG), 157-179 (IGTY…AVLV), and 184-203 (FWGH…SSTL). Ser134 serves as the catalytic Nucleophile. His187 is a catalytic residue.

It belongs to the peptidase S54 family.

The protein resides in the golgi apparatus membrane. Its subcellular location is the golgi apparatus. It localises to the cis-Golgi network membrane. It carries out the reaction Cleaves type-1 transmembrane domains using a catalytic dyad composed of serine and histidine that are contributed by different transmembrane domains.. Its function is as follows. Probable rhomboid-type serine protease that catalyzes intramembrane proteolysis. This Podospora anserina (Pleurage anserina) protein is Rhomboid-type serine protease 2 (RBD2).